Reading from the N-terminus, the 473-residue chain is Cysteine protease ATG4A (473 aa).

Positions 1 to 33 (MTSLPGRGVSPSSSDPLCEGNAAPSSSSSGQDL) are disordered. Cys160 functions as the Nucleophile in the catalytic mechanism. Residues Asp357 and His359 contribute to the active site.

Belongs to the peptidase C54 family. In terms of assembly, interacts with ATG8.

It localises to the cytoplasm. The catalysed reaction is [protein]-C-terminal L-amino acid-glycyl-phosphatidylethanolamide + H2O = [protein]-C-terminal L-amino acid-glycine + a 1,2-diacyl-sn-glycero-3-phosphoethanolamine. Cysteine protease that plays a key role in autophagy by mediating both proteolytic activation and delipidation of ATG8 family proteins. The protease activity is required for proteolytic activation of ATG8 family proteins: cleaves the C-terminal amino acid of ATG8 proteins to reveal a C-terminal glycine. Exposure of the glycine at the C-terminus is essential for ATG8 proteins conjugation to phosphatidylethanolamine (PE) and insertion to membranes, which is necessary for autophagy. In addition to the protease activity, also mediates delipidation of PE-conjugated ATG8 proteins. The sequence is that of Cysteine protease ATG4A (ATG4A) from Oryza sativa subsp. indica (Rice).